A 162-amino-acid polypeptide reads, in one-letter code: Transcription antitermination protein NusB (162 aa).

The protein belongs to the NusB family.

Functionally, involved in transcription antitermination. Required for transcription of ribosomal RNA (rRNA) genes. Binds specifically to the boxA antiterminator sequence of the ribosomal RNA (rrn) operons. The polypeptide is Transcription antitermination protein NusB (Mycobacterium sp. (strain JLS)).